The sequence spans 210 residues: Thymidylate kinase (210 aa).

9 to 16 (GLEGAGKS) lines the ATP pocket.

This sequence belongs to the thymidylate kinase family.

It catalyses the reaction dTMP + ATP = dTDP + ADP. Phosphorylation of dTMP to form dTDP in both de novo and salvage pathways of dTTP synthesis. The polypeptide is Thymidylate kinase (Aliivibrio salmonicida (strain LFI1238) (Vibrio salmonicida (strain LFI1238))).